Here is a 187-residue protein sequence, read N- to C-terminus: UPF0200 protein PYRAB09750 (187 aa).

7-14 (GMPGSGKG) is an ATP binding site.

It belongs to the UPF0200 family.

In Pyrococcus abyssi (strain GE5 / Orsay), this protein is UPF0200 protein PYRAB09750.